We begin with the raw amino-acid sequence, 216 residues long: GTP cyclohydrolase 1 2 (216 aa).

Belongs to the GTP cyclohydrolase I family. As to quaternary structure, homomer.

The enzyme catalyses GTP + H2O = 7,8-dihydroneopterin 3'-triphosphate + formate + H(+). It functions in the pathway cofactor biosynthesis; 7,8-dihydroneopterin triphosphate biosynthesis; 7,8-dihydroneopterin triphosphate from GTP: step 1/1. This chain is GTP cyclohydrolase 1 2 (folE2), found in Nostoc sp. (strain PCC 7120 / SAG 25.82 / UTEX 2576).